Here is a 301-residue protein sequence, read N- to C-terminus: tRNA pseudouridine synthase B (301 aa).

Aspartate 45 acts as the Nucleophile in catalysis.

This sequence belongs to the pseudouridine synthase TruB family. Type 1 subfamily.

The catalysed reaction is uridine(55) in tRNA = pseudouridine(55) in tRNA. Functionally, responsible for synthesis of pseudouridine from uracil-55 in the psi GC loop of transfer RNAs. The polypeptide is tRNA pseudouridine synthase B (Streptomyces coelicolor (strain ATCC BAA-471 / A3(2) / M145)).